A 307-amino-acid polypeptide reads, in one-letter code: Small ribosomal subunit biogenesis GTPase RsgA (307 aa).

Residues 1 to 20 (MPSEHPFSDGISTPNPKETM) are disordered. Over residues 10-20 (GISTPNPKETM) the composition is skewed to polar residues. Residues 85–242 (RQDAWKTKLI…LIDSPGLQEF (158 aa)) enclose the CP-type G domain. GTP contacts are provided by residues 135-138 (NKAD) and 184-192 (GQSGMGKST). C266, C271, H273, and C279 together coordinate Zn(2+).

This sequence belongs to the TRAFAC class YlqF/YawG GTPase family. RsgA subfamily. As to quaternary structure, monomer. Associates with 30S ribosomal subunit, binds 16S rRNA. It depends on Zn(2+) as a cofactor.

It is found in the cytoplasm. Its function is as follows. One of several proteins that assist in the late maturation steps of the functional core of the 30S ribosomal subunit. Helps release RbfA from mature subunits. May play a role in the assembly of ribosomal proteins into the subunit. Circularly permuted GTPase that catalyzes slow GTP hydrolysis, GTPase activity is stimulated by the 30S ribosomal subunit. The polypeptide is Small ribosomal subunit biogenesis GTPase RsgA (Neisseria meningitidis serogroup A / serotype 4A (strain DSM 15465 / Z2491)).